The following is a 166-amino-acid chain: UPF0254 protein Mevan_0254 (166 aa).

This sequence belongs to the UPF0254 family.

In Methanococcus vannielii (strain ATCC 35089 / DSM 1224 / JCM 13029 / OCM 148 / SB), this protein is UPF0254 protein Mevan_0254.